Reading from the N-terminus, the 229-residue chain is MEGFLRFLVAKAILLALASSFVSCYDPSPLQDFCVAVDDASGVFVNGKFCKDPKYVKAEDFFTSGLNIAGNTINRVGSNVTNVNVDKIPGLNTLGVSLVRIDFAPGGQNPPHTHPRATEILVVVEGTLLVGFVTSNQDNNRLFSKVLYPGDVFVFPIGMIHFQVNVGRTNAVAFAGLGSQNPGTITIADAVFGSKPSIMPEILAKAFQLDVNVVKYLEARFSSNYDRHY.

The N-terminal stretch at 1-24 (MEGFLRFLVAKAILLALASSFVSC) is a signal peptide. A disulfide bond links C34 and C50. Residues 64–215 (SGLNIAGNTI…AFQLDVNVVK (152 aa)) form the Cupin type-1 domain. N79 is a glycosylation site (N-linked (GlcNAc...) asparagine). Mn(2+) contacts are provided by H112, H114, E119, and H161.

This sequence belongs to the germin family. In terms of assembly, oligomer (believed to be a pentamer but probably hexamer).

It is found in the secreted. It localises to the extracellular space. The protein localises to the apoplast. Functionally, may play a role in plant defense. Probably has no oxalate oxidase activity even if the active site is conserved. This is Germin-like protein subfamily 1 member 7 from Arabidopsis thaliana (Mouse-ear cress).